Here is a 130-residue protein sequence, read N- to C-terminus: Small ribosomal subunit protein uS11 (130 aa).

It belongs to the universal ribosomal protein uS11 family. Part of the 30S ribosomal subunit. Interacts with proteins S7 and S18. Binds to IF-3.

Located on the platform of the 30S subunit, it bridges several disparate RNA helices of the 16S rRNA. Forms part of the Shine-Dalgarno cleft in the 70S ribosome. The polypeptide is Small ribosomal subunit protein uS11 (Alteromonas mediterranea (strain DSM 17117 / CIP 110805 / LMG 28347 / Deep ecotype)).